We begin with the raw amino-acid sequence, 322 residues long: Undecaprenyl-phosphate 4-deoxy-4-formamido-L-arabinose transferase (322 aa).

Residues 1–235 lie on the Cytoplasmic side of the membrane; that stretch reads MFEIHPVKKV…TCLTTTPLRM (235 aa). Residues 236–256 form a helical membrane-spanning segment; it reads LSLLGSIIAIGGFSIAVLLVI. Over 257-269 the chain is Periplasmic; it reads LRLTFGPQWAAEG. Residues 270-290 traverse the membrane as a helical segment; that stretch reads VFMLFAVLFTFIGAQFIGMGL. The Cytoplasmic segment spans residues 291-322; the sequence is LGEYIGRIYTDVRARPRYFVQQVIRPSSKENE.

Belongs to the glycosyltransferase 2 family.

The protein resides in the cell inner membrane. It catalyses the reaction UDP-4-deoxy-4-formamido-beta-L-arabinose + di-trans,octa-cis-undecaprenyl phosphate = 4-deoxy-4-formamido-alpha-L-arabinopyranosyl di-trans,octa-cis-undecaprenyl phosphate + UDP. It participates in glycolipid biosynthesis; 4-amino-4-deoxy-alpha-L-arabinose undecaprenyl phosphate biosynthesis; 4-amino-4-deoxy-alpha-L-arabinose undecaprenyl phosphate from UDP-4-deoxy-4-formamido-beta-L-arabinose and undecaprenyl phosphate: step 1/2. The protein operates within bacterial outer membrane biogenesis; lipopolysaccharide biosynthesis. Functionally, catalyzes the transfer of 4-deoxy-4-formamido-L-arabinose from UDP to undecaprenyl phosphate. The modified arabinose is attached to lipid A and is required for resistance to polymyxin and cationic antimicrobial peptides. This Shigella flexneri serotype 5b (strain 8401) protein is Undecaprenyl-phosphate 4-deoxy-4-formamido-L-arabinose transferase.